Consider the following 100-residue polypeptide: MSLELSDVKRLSTLAQIELTTEQSAQTLDKLNGIFALVEQLRAVDTTGIEPLNHPIATMLPDLALRLREDVVSEANRRDDYQKVAPATQDGLYLVPKVIE.

Belongs to the GatC family. Heterotrimer of A, B and C subunits.

The enzyme catalyses L-glutamyl-tRNA(Gln) + L-glutamine + ATP + H2O = L-glutaminyl-tRNA(Gln) + L-glutamate + ADP + phosphate + H(+). The catalysed reaction is L-aspartyl-tRNA(Asn) + L-glutamine + ATP + H2O = L-asparaginyl-tRNA(Asn) + L-glutamate + ADP + phosphate + 2 H(+). Allows the formation of correctly charged Asn-tRNA(Asn) or Gln-tRNA(Gln) through the transamidation of misacylated Asp-tRNA(Asn) or Glu-tRNA(Gln) in organisms which lack either or both of asparaginyl-tRNA or glutaminyl-tRNA synthetases. The reaction takes place in the presence of glutamine and ATP through an activated phospho-Asp-tRNA(Asn) or phospho-Glu-tRNA(Gln). The protein is Aspartyl/glutamyl-tRNA(Asn/Gln) amidotransferase subunit C of Janthinobacterium sp. (strain Marseille) (Minibacterium massiliensis).